Reading from the N-terminus, the 86-residue chain is Cell division topological specificity factor (86 aa).

This sequence belongs to the MinE family.

Prevents the cell division inhibition by proteins MinC and MinD at internal division sites while permitting inhibition at polar sites. This ensures cell division at the proper site by restricting the formation of a division septum at the midpoint of the long axis of the cell. The sequence is that of Cell division topological specificity factor from Alteromonas mediterranea (strain DSM 17117 / CIP 110805 / LMG 28347 / Deep ecotype).